Reading from the N-terminus, the 151-residue chain is Ribonuclease H (151 aa).

One can recognise an RNase H type-1 domain in the interval 1–141; sequence MKNVIIYTDG…ADALANRGID (141 aa). Positions 9, 47, 69, and 133 each coordinate Mg(2+).

It belongs to the RNase H family. Monomer. Requires Mg(2+) as cofactor.

Its subcellular location is the cytoplasm. The catalysed reaction is Endonucleolytic cleavage to 5'-phosphomonoester.. Its function is as follows. Endonuclease that specifically degrades the RNA of RNA-DNA hybrids. In Alcanivorax borkumensis (strain ATCC 700651 / DSM 11573 / NCIMB 13689 / SK2), this protein is Ribonuclease H.